The sequence spans 365 residues: Cobalt-precorrin-5B C(1)-methyltransferase (365 aa).

This sequence belongs to the CbiD family.

The catalysed reaction is Co-precorrin-5B + S-adenosyl-L-methionine = Co-precorrin-6A + S-adenosyl-L-homocysteine. The protein operates within cofactor biosynthesis; adenosylcobalamin biosynthesis; cob(II)yrinate a,c-diamide from sirohydrochlorin (anaerobic route): step 6/10. Its function is as follows. Catalyzes the methylation of C-1 in cobalt-precorrin-5B to form cobalt-precorrin-6A. The sequence is that of Cobalt-precorrin-5B C(1)-methyltransferase from Clostridium perfringens (strain SM101 / Type A).